The chain runs to 275 residues: Dermonecrotic toxin SpeSicTox-betaIIA2ii (275 aa).

The active site involves H5. Positions 25 and 27 each coordinate Mg(2+). H41 functions as the Nucleophile in the catalytic mechanism. 2 cysteine pairs are disulfide-bonded: C45-C51 and C47-C190. D85 lines the Mg(2+) pocket.

The protein belongs to the arthropod phospholipase D family. Class II subfamily. Mg(2+) serves as cofactor. As to expression, expressed by the venom gland.

Its subcellular location is the secreted. It carries out the reaction an N-(acyl)-sphingosylphosphocholine = an N-(acyl)-sphingosyl-1,3-cyclic phosphate + choline. The enzyme catalyses an N-(acyl)-sphingosylphosphoethanolamine = an N-(acyl)-sphingosyl-1,3-cyclic phosphate + ethanolamine. The catalysed reaction is a 1-acyl-sn-glycero-3-phosphocholine = a 1-acyl-sn-glycero-2,3-cyclic phosphate + choline. It catalyses the reaction a 1-acyl-sn-glycero-3-phosphoethanolamine = a 1-acyl-sn-glycero-2,3-cyclic phosphate + ethanolamine. Its function is as follows. Dermonecrotic toxins cleave the phosphodiester linkage between the phosphate and headgroup of certain phospholipids (sphingolipid and lysolipid substrates), forming an alcohol (often choline) and a cyclic phosphate. This toxin acts on sphingomyelin (SM). It may also act on ceramide phosphoethanolamine (CPE), lysophosphatidylcholine (LPC) and lysophosphatidylethanolamine (LPE), but not on lysophosphatidylserine (LPS), and lysophosphatidylglycerol (LPG). It acts by transphosphatidylation, releasing exclusively cyclic phosphate products as second products. Induces dermonecrosis, hemolysis, increased vascular permeability, edema, inflammatory response, and platelet aggregation. This is Dermonecrotic toxin SpeSicTox-betaIIA2ii from Sicarius peruensis (Six-eyed sand spider).